The following is a 52-amino-acid chain: UPF0181 protein CGSHiGG_01050 (52 aa).

The protein belongs to the UPF0181 family.

This Haemophilus influenzae (strain PittGG) protein is UPF0181 protein CGSHiGG_01050.